Reading from the N-terminus, the 485-residue chain is MTVSKKDSGKTSPGNIVVVSNRLPVTISKNAMGKYEYKFSSGGLVTALQGLKKTSTFQWYGWPSLEIPDDEKPVVKKDLLEKFNAIPIFLSDEIADLHYNGFSNSILWPLFHYHPGEINFDENAWLAYNEANATFASEICGNLQDNDLVWVHDYHLMLLPEMLSAHIQRKGLKNIKLGWFLHTPFPSSEIYRILPVRQEILNGVLSCDLIGFHTYDYARHFLSSIQRCLNVNTLPNGVEYQGRFVNVGAFPIGIDVDTFKEGLQKENVKQRIRTLQERFKGCKIMVGVDRLDYIKGVPQKLHAMEVFLNEHPEWIGKVVLVQLAIPSRGDVEEYQYLRSVVNELVGRINGQFGTIEFVPIHFMHKSIPFEELISLYAVSDACIVSSTRDGMNLVSYEYIACRKKGSLILSEFTGAAQSLNGALIVNPWNTDELSDSINEALTLPDEKKDSNWEKLYKYISKYTSAYWGENFVHELNATGTIKTGQ.

Positions 99 and 153 each coordinate D-glucose 6-phosphate. UDP-binding residues include Arg290 and Lys295. Residues Arg290 and Lys295 each coordinate UDP-alpha-D-glucose. Residue Arg328 coordinates D-glucose 6-phosphate. UDP is bound by residues Ile367 and 393-397 (LVSYE). UDP-alpha-D-glucose is bound by residues Ile367 and 389–397 (DGMNLVSYE).

Belongs to the glycosyltransferase 20 family.

The catalysed reaction is D-glucose 6-phosphate + UDP-alpha-D-glucose = alpha,alpha-trehalose 6-phosphate + UDP + H(+). The protein operates within carbohydrate biosynthesis. In terms of biological role, synthase catalytic subunit of the trehalose synthase complex that catalyzes the production of trehalose from glucose-6-phosphate and UDP-alpha-D-glucose in a two step process. This Zygosaccharomyces rouxii protein is Alpha,alpha-trehalose-phosphate synthase [UDP-forming].